The chain runs to 308 residues: Mu-like prophage FluMu major head subunit (308 aa).

The protein to phage Mu protein T.

The sequence is that of Mu-like prophage FluMu major head subunit from Haemophilus influenzae (strain ATCC 51907 / DSM 11121 / KW20 / Rd).